Consider the following 618-residue polypeptide: Probable arginine--tRNA ligase, cytoplasmic (618 aa).

2 interaction with tRNA regions span residues 60-61 and 104-109; these read ET and NGIFLR. L-arginine contacts are provided by residues 146–151, His160, Tyr359, Asp363, and Gln387; that span reads EFSSPN. The 'HIGH' region signature appears at 149-160; the sequence is SPNIAKPFHAGH. The interval 496–510 is interaction with tRNA; it reads DTGPYLQYAHSRLSS.

This sequence belongs to the class-I aminoacyl-tRNA synthetase family.

Its subcellular location is the cytoplasm. It catalyses the reaction tRNA(Arg) + L-arginine + ATP = L-arginyl-tRNA(Arg) + AMP + diphosphate. In terms of biological role, forms part of a macromolecular complex that catalyzes the attachment of specific amino acids to cognate tRNAs during protein synthesis. This chain is Probable arginine--tRNA ligase, cytoplasmic (mrs1), found in Schizosaccharomyces pombe (strain 972 / ATCC 24843) (Fission yeast).